Here is a 184-residue protein sequence, read N- to C-terminus: Nucleoporin-62 C-terminal-like protein (184 aa).

Residues Arg117 to Leu151 adopt a coiled-coil conformation.

It belongs to the nucleoporin NSP1/NUP62 family.

In Homo sapiens (Human), this protein is Nucleoporin-62 C-terminal-like protein (NUP62CL).